We begin with the raw amino-acid sequence, 361 residues long: Phospho-N-acetylmuramoyl-pentapeptide-transferase (361 aa).

10 consecutive transmembrane segments (helical) span residues 28 to 48 (LAII…IKFL), 74 to 94 (TMGG…LADL), 99 to 119 (IWIT…DDYA), 133 to 153 (SKLL…EYTD), 168 to 188 (LSLD…VGSS), 203 to 223 (VPIA…GNLI), 236 to 256 (TGEL…FLWF), 263 to 283 (VFMG…ISVI), 288 to 308 (VVLS…ILQV), and 338 to 358 (KVVI…LSSL).

The protein belongs to the glycosyltransferase 4 family. MraY subfamily. Requires Mg(2+) as cofactor.

The protein localises to the cell inner membrane. The enzyme catalyses UDP-N-acetyl-alpha-D-muramoyl-L-alanyl-gamma-D-glutamyl-meso-2,6-diaminopimeloyl-D-alanyl-D-alanine + di-trans,octa-cis-undecaprenyl phosphate = di-trans,octa-cis-undecaprenyl diphospho-N-acetyl-alpha-D-muramoyl-L-alanyl-D-glutamyl-meso-2,6-diaminopimeloyl-D-alanyl-D-alanine + UMP. It functions in the pathway cell wall biogenesis; peptidoglycan biosynthesis. Its function is as follows. Catalyzes the initial step of the lipid cycle reactions in the biosynthesis of the cell wall peptidoglycan: transfers peptidoglycan precursor phospho-MurNAc-pentapeptide from UDP-MurNAc-pentapeptide onto the lipid carrier undecaprenyl phosphate, yielding undecaprenyl-pyrophosphoryl-MurNAc-pentapeptide, known as lipid I. The sequence is that of Phospho-N-acetylmuramoyl-pentapeptide-transferase from Rickettsia canadensis (strain McKiel).